We begin with the raw amino-acid sequence, 668 residues long: Phosphatidylinositol 4-phosphate 5-kinase type-1 gamma (668 aa).

The disordered stretch occupies residues Ser-45–Gly-67. A PIPK domain is found at Thr-75 to Val-443. N6-acetyllysine occurs at positions 265 and 268. The residue at position 459 (Arg-459) is an Asymmetric dimethylarginine; alternate. Arg-459 carries the omega-N-methylarginine; alternate modification. The segment covering Thr-526–Ile-535 has biased composition (low complexity). Disordered regions lie at residues Thr-526–Gln-578 and Glu-593–Thr-642. Position 555 is a phosphoserine (Ser-555). Phosphotyrosine; by EGFR is present on Tyr-639. A mediates interaction with TLN2 region spans residues Pro-641–Thr-668. At Tyr-649 the chain carries Phosphotyrosine; by CSK. Phosphoserine; by CDK5, MAPK1 and CDK1 is present on Ser-650. Residues Ser-662 and Ser-666 each carry the phosphoserine modification. The residue at position 668 (Thr-668) is a Phosphothreonine.

Interacts with TLN1. Interacts with TLN2; interaction stimulates 1-phosphatidylinositol-4-phosphate 5-kinase activity. May compete with beta-integrins for the same binding site on TLN1 and TLN2. Interacts with ARF6; interaction stimulates 1-phosphatidylinositol-4-phosphate 5-kinase activity. Interacts with AP2B1. Interacts with AP2M1; phosphorylation of PIP5K1C by CSK disrupts the interaction; clathrin competes with PIP5K1C. Interacts with CDH1. Interacts with CSK. Interacts with PLCG1; interaction is abolished upon EGF stimulation. Interacts with LAPTM4B; promotes SNX5 association with LAPTM4B; kinase activity of PIP5K1C is required; interaction is regulated by phosphatidylinositol 4,5-bisphosphate generated by PIP5K1C. Phosphorylation on Ser-650 negatively regulates binding to TLN2 and is strongly stimulated in mitosis. Phosphorylation on Tyr-649 is necessary for targeting to focal adhesions. Phosphorylation on Ser-650 and Tyr-649 are mutually exclusive. Phosphorylated by SYK and CSK. Tyrosine phosphorylation is enhanced by PTK2 signaling. Phosphorylated at Tyr-639 upon EGF stimulation. Some studies suggest that phosphorylation on Tyr-649 enhances binding to tailins (TLN1 and TLN2). According to PubMed:15738269 phosphorylation at Tyr-649 does not directly enhance binding to tailins (TLN1 and TLN2) but may act indirectly by inhibiting phosphorylation at Ser-650. Post-translationally, acetylation at Lys-265 and Lys-268 seems to decrease lipid 1-phosphatidylinositol-4-phosphate 5-kinase activity. Deacetylation of these sites by SIRT1 positively regulates the exocytosis of TSH-containing granules from pituitary cells. Isoform 1 is strongly expressed in brain and also detected in heart and lung. In terms of tissue distribution, isoform 2 is strongly expressed in pancreas and liver and in lesser quantities in brain, heart, lung and kidney. As to expression, isoform 3 is detected in large amounts in heart and large intestine, is also present in lung, pancreas and thyroid, and to a lesser extent in brain, stomach and kidney.

It is found in the cell membrane. The protein localises to the endomembrane system. The protein resides in the cytoplasm. Its subcellular location is the cell junction. It localises to the focal adhesion. It is found in the adherens junction. The protein localises to the cell projection. The protein resides in the ruffle membrane. Its subcellular location is the phagocytic cup. It localises to the uropodium. It is found in the nucleus. It carries out the reaction a 1,2-diacyl-sn-glycero-3-phospho-(1D-myo-inositol 4-phosphate) + ATP = a 1,2-diacyl-sn-glycero-3-phospho-(1D-myo-inositol-4,5-bisphosphate) + ADP + H(+). It catalyses the reaction 1-octadecanoyl-2-(5Z,8Z,11Z,14Z)-eicosatetraenoyl-sn-glycero-3-phospho-1D-myo-inositol 4-phosphate + ATP = 1-octadecanoyl-2-(5Z,8Z,11Z,14Z)-eicosatetraenoyl-sn-glycero-3-phospho-1D-myo-inositol 4,5-bisphosphate + ADP + H(+). The catalysed reaction is 1-octadecanoyl-2-(9Z)-octadecenoyl-sn-glycero-3-phospho-1D-myo-inositol 4-phosphate + ATP = 1-octadecanoyl-2-(9Z)-octadecenoyl-sn-glycero-3-phospho-1D-myo-inositol 4,5-bisphosphate + ADP + H(+). The enzyme catalyses 1-octadecanoyl-2-(9Z)-octadecenoyl-sn-glycero-3-phospho-1D-myo-inositol + ATP = 1-octadecanoyl-2-(9Z)-octadecenoyl-sn-glycero-3-phospho-1D-myo-inositol 5-phosphate + ADP + H(+). It carries out the reaction 1-octadecanoyl-2-(9Z,12Z)-octadecadienoyl-sn-glycero-3-phospho-1D-myo-inositol + ATP = 1-octadecanoyl-2-(9Z,12Z)-octadecadienoyl-sn-glycero-3-phospho-1D-myo-inositol 5-phosphate + ADP + H(+). It catalyses the reaction 1-octadecanoyl-2-(5Z,8Z,11Z,14Z-eicosatetraenoyl)-sn-glycero-3-phospho-(1D-myo-inositol) + ATP = 1-octadecanoyl-2-(5Z,8Z,11Z,14Z)-eicosatetraenoyl-sn-glycero-3-phospho-1D-myo-inositol 5-phosphate + ADP + H(+). The catalysed reaction is 1,2-di-(9Z,12Z)-octadecadienoyl-sn-glycero-3-phospho-1D-myo-inositol + ATP = 1,2-di(9Z,12Z)-octadecadienoyl-sn-glycero-3-phospho-1D-myo-inositol 5-phosphate + ADP + H(+). Its function is as follows. Catalyzes the phosphorylation of phosphatidylinositol 4-phosphate (PtdIns(4)P/PI4P) to form phosphatidylinositol 4,5-bisphosphate (PtdIns(4,5)P2/PIP2), a lipid second messenger that regulates several cellular processes such as signal transduction, vesicle trafficking, actin cytoskeleton dynamics, cell adhesion, and cell motility. PtdIns(4,5)P2 can directly act as a second messenger or can be utilized as a precursor to generate other second messengers: inositol 1,4,5-trisphosphate (IP3), diacylglycerol (DAG) or phosphatidylinositol-3,4,5-trisphosphate (PtdIns(3,4,5)P3/PIP3). PIP5K1A-mediated phosphorylation of PtdIns(4)P is the predominant pathway for PtdIns(4,5)P2 synthesis. Together with PIP5K1A, is required for phagocytosis, both enzymes regulating different types of actin remodeling at sequential steps. Promotes particle attachment by generating the pool of PtdIns(4,5)P2 that induces controlled actin depolymerization to facilitate Fc-gamma-R clustering. Mediates RAC1-dependent reorganization of actin filaments. Required for synaptic vesicle transport. Controls the plasma membrane pool of PtdIns(4,5)P2 implicated in synaptic vesicle endocytosis and exocytosis. Plays a role in endocytosis mediated by clathrin and AP-2 (adaptor protein complex 2). Required for clathrin-coated pits assembly at the synapse. Participates in cell junction assembly. Modulates adherens junctions formation by facilitating CDH1/cadherin trafficking. Required for focal adhesion dynamics. Modulates the targeting of talins (TLN1 and TLN2) to the plasma membrane and their efficient assembly into focal adhesions. Regulates the interaction between talins (TLN1 and TLN2) and beta-integrins. Required for uropodium formation and retraction of the cell rear during directed migration. Has a role in growth factor-stimulated directional cell migration and adhesion. Required for talin assembly into nascent adhesions forming at the leading edge toward the direction of the growth factor. Negative regulator of T-cell activation and adhesion. Negatively regulates integrin alpha-L/beta-2 (LFA-1) polarization and adhesion induced by T-cell receptor. Together with PIP5K1A has a role during embryogenesis and together with PIP5K1B may have a role immediately after birth. The polypeptide is Phosphatidylinositol 4-phosphate 5-kinase type-1 gamma (Homo sapiens (Human)).